Here is a 318-residue protein sequence, read N- to C-terminus: Endochitinase 1 (318 aa).

A signal peptide spans 1 to 18 (EFTTLFLLFSVLLLSASA). One can recognise a Chitin-binding type-1 domain in the interval 19–60 (EQCGSQAGGALCASGLCCSKFGWCGDTNDYCGPGNCQSQCPG). Intrachain disulfides connect Cys21–Cys36, Cys30–Cys42, Cys35–Cys49, Cys54–Cys58, Cys89–Cys152, Cys164–Cys172, and Cys271–Cys303. The active-site Proton donor is the Glu134. Residues 312-318 (GLLVDTM) constitute a propeptide, removed in mature form, vacuolar targeting.

Belongs to the glycosyl hydrolase 19 family. Chitinase class I subfamily.

It localises to the vacuole. The enzyme catalyses Random endo-hydrolysis of N-acetyl-beta-D-glucosaminide (1-&gt;4)-beta-linkages in chitin and chitodextrins.. Defense against chitin-containing fungal pathogens. In Solanum tuberosum (Potato), this protein is Endochitinase 1 (CHTB1).